The chain runs to 151 residues: Ribosome maturation factor RimP (151 aa).

This sequence belongs to the RimP family.

The protein localises to the cytoplasm. Required for maturation of 30S ribosomal subunits. This Pseudoalteromonas translucida (strain TAC 125) protein is Ribosome maturation factor RimP.